A 631-amino-acid polypeptide reads, in one-letter code: DNA mismatch repair protein MutL (631 aa).

2 disordered regions span residues 337 to 362 and 400 to 429; these read PHSPQIDDSSPYVKPETESSAFELQS and AVQSNAFGSMSVPRETRSGSSGESRPRAEL.

It belongs to the DNA mismatch repair MutL/HexB family.

Its function is as follows. This protein is involved in the repair of mismatches in DNA. It is required for dam-dependent methyl-directed DNA mismatch repair. May act as a 'molecular matchmaker', a protein that promotes the formation of a stable complex between two or more DNA-binding proteins in an ATP-dependent manner without itself being part of a final effector complex. This Shewanella oneidensis (strain ATCC 700550 / JCM 31522 / CIP 106686 / LMG 19005 / NCIMB 14063 / MR-1) protein is DNA mismatch repair protein MutL.